Here is a 313-residue protein sequence, read N- to C-terminus: 4-hydroxy-3-methylbut-2-enyl diphosphate reductase (313 aa).

[4Fe-4S] cluster is bound at residue Cys-12. (2E)-4-hydroxy-3-methylbut-2-enyl diphosphate-binding residues include His-41 and His-74. Dimethylallyl diphosphate contacts are provided by His-41 and His-74. Residues His-41 and His-74 each coordinate isopentenyl diphosphate. Cys-96 is a binding site for [4Fe-4S] cluster. His-124 lines the (2E)-4-hydroxy-3-methylbut-2-enyl diphosphate pocket. His-124 is a binding site for dimethylallyl diphosphate. An isopentenyl diphosphate-binding site is contributed by His-124. Glu-126 serves as the catalytic Proton donor. Thr-167 provides a ligand contact to (2E)-4-hydroxy-3-methylbut-2-enyl diphosphate. Cys-197 provides a ligand contact to [4Fe-4S] cluster. (2E)-4-hydroxy-3-methylbut-2-enyl diphosphate contacts are provided by Ser-225, Ser-226, Asn-227, and Ser-269. The dimethylallyl diphosphate site is built by Ser-225, Ser-226, Asn-227, and Ser-269. Isopentenyl diphosphate-binding residues include Ser-225, Ser-226, Asn-227, and Ser-269.

It belongs to the IspH family. [4Fe-4S] cluster is required as a cofactor.

It carries out the reaction isopentenyl diphosphate + 2 oxidized [2Fe-2S]-[ferredoxin] + H2O = (2E)-4-hydroxy-3-methylbut-2-enyl diphosphate + 2 reduced [2Fe-2S]-[ferredoxin] + 2 H(+). The catalysed reaction is dimethylallyl diphosphate + 2 oxidized [2Fe-2S]-[ferredoxin] + H2O = (2E)-4-hydroxy-3-methylbut-2-enyl diphosphate + 2 reduced [2Fe-2S]-[ferredoxin] + 2 H(+). It participates in isoprenoid biosynthesis; dimethylallyl diphosphate biosynthesis; dimethylallyl diphosphate from (2E)-4-hydroxy-3-methylbutenyl diphosphate: step 1/1. The protein operates within isoprenoid biosynthesis; isopentenyl diphosphate biosynthesis via DXP pathway; isopentenyl diphosphate from 1-deoxy-D-xylulose 5-phosphate: step 6/6. In terms of biological role, catalyzes the conversion of 1-hydroxy-2-methyl-2-(E)-butenyl 4-diphosphate (HMBPP) into a mixture of isopentenyl diphosphate (IPP) and dimethylallyl diphosphate (DMAPP). Acts in the terminal step of the DOXP/MEP pathway for isoprenoid precursor biosynthesis. This is 4-hydroxy-3-methylbut-2-enyl diphosphate reductase from Methylococcus capsulatus (strain ATCC 33009 / NCIMB 11132 / Bath).